The primary structure comprises 342 residues: MPHKDNLLESPVGKSVTATIAYHSGPALPTSPIAGVTTLQDCTQQAVAVTDIRPSVSSFTLDGNGFQVVKHTSAVGSPPYDHSSWTDPVVRKEVYDPEIIELAKSLTGAKKVMILLASSRNVPFKEPELAPPYPMPGKSSSGSKEREAIPANELPTTRAKGFQKGEEEGPVRKPHKDWGPSGAWNTLRNWSQELIDEAGDIIKAGDEAAKLPGGRAKNYQGRRWALYTTWRPLKTVKRDPMAYVDYWTADEEDGVSFWRNPPGVHGTFESDVLLTKANPKHKWYWISDQTPDEVLLMKIMDTESEKDGSEIAGGVHHCSFHLPGTEKEEVRESIETKFIAFW.

A disordered region spans residues 127–183 (PELAPPYPMPGKSSSGSKEREAIPANELPTTRAKGFQKGEEEGPVRKPHKDWGPSGA).

The protein belongs to the asaB hydroxylase/desaturase family.

It participates in plant hormone biosynthesis; gibberellin biosynthesis. In terms of biological role, GA4 desaturase; part of the gene cluster that mediates the biosynthesis of gibberellins (GAs), diterpenoids that may provide a selective advantage during infection of the preferred host plant, rice. Gibberellins (GAs) are diterpenoids and are synthesized via the mevalonate pathway. Biosynthesis of the major metabolite GA3 (gibberellic acid) from geranylgeranyl diphosphate (GGPP) requires 13 steps. The GGPP produced by the geranylgeranyl diphosphate synthase GGS2 is converted to ent-kaurene via ent-copalyldiphosphate in a two-step cyclization reaction performed by the bifunctional ent-copalyl diphosphate synthase/ent-kaurene synthase enzyme (CPS/KS). Ent-Kaurene is metabolized to GAs by a series of oxidation reactions catalyzed by cytochrome P450 monooxygenases. Cytochrome P450 monooxygenase P450-4 is an ent-kaurene oxidase that catalyzes the three oxidation steps between ent-kaurene and ent-kaurenoic acid. The highly multifunctional cytochrome P450 monooxygenase P450-1 then catalyzes four steps involving oxidation at two carbon atoms, in the main pathway from ent-kaurenoic acid to GA14 via GA12-aldehyde as well as producing kaurenolides and fujenoic acids as by-products. The cytochrome P450 monooxygenase P450-2 then converts GA14 to GA4 by removal of C-20. GA4 is further converted to GA7 by the GA4 desaturase DES via 1,2-desaturation before cytochrome P450 monooxygenase P450-3, a 13-hydroxylase, hydroxylates GA7 to GA3, the final product of the GA-biosynthetic pathway. The protein is Gibberellin cluster GA4 desaturase of Gibberella fujikuroi (strain CBS 195.34 / IMI 58289 / NRRL A-6831) (Bakanae and foot rot disease fungus).